A 120-amino-acid polypeptide reads, in one-letter code: Immunoglobulin kappa variable 2-24 (120 aa).

The signal sequence occupies residues 1-19 (MRLLAQLLGLLMLWVPGSS). The Ig-like domain occupies 20–120 (GDIVMTQTPL…YYCMQATQFP (101 aa)). Residues 21 to 43 (DIVMTQTPLSSPVTLGQPASISC) form a framework-1 region. Cysteine 43 and cysteine 113 are oxidised to a cystine. The interval 44–59 (RSSQSLVHSDGNTYLS) is complementarity-determining-1. Residues 60–74 (WLQQRPGQPPRLLIY) form a framework-2 region. The complementarity-determining-2 stretch occupies residues 75-81 (KISNRFS). Residues 82–113 (GVPDRFSGSGAGTDFTLKISRVEAEDVGVYYC) form a framework-3 region. The interval 114–120 (MQATQFP) is complementarity-determining-3.

As to quaternary structure, immunoglobulins are composed of two identical heavy chains and two identical light chains; disulfide-linked.

Its subcellular location is the secreted. It is found in the cell membrane. V region of the variable domain of immunoglobulin light chains that participates in the antigen recognition. Immunoglobulins, also known as antibodies, are membrane-bound or secreted glycoproteins produced by B lymphocytes. In the recognition phase of humoral immunity, the membrane-bound immunoglobulins serve as receptors which, upon binding of a specific antigen, trigger the clonal expansion and differentiation of B lymphocytes into immunoglobulins-secreting plasma cells. Secreted immunoglobulins mediate the effector phase of humoral immunity, which results in the elimination of bound antigens. The antigen binding site is formed by the variable domain of one heavy chain, together with that of its associated light chain. Thus, each immunoglobulin has two antigen binding sites with remarkable affinity for a particular antigen. The variable domains are assembled by a process called V-(D)-J rearrangement and can then be subjected to somatic hypermutations which, after exposure to antigen and selection, allow affinity maturation for a particular antigen. This Homo sapiens (Human) protein is Immunoglobulin kappa variable 2-24.